The sequence spans 366 residues: Putative ankyrin repeat protein RBE_0601 (366 aa).

ANK repeat units lie at residues Lys-39–Glu-68, Leu-94–Thr-124, His-131–Gln-160, Val-162–Asp-186, Lys-210–Ala-239, and Ile-250–Lys-280.

This Rickettsia bellii (strain RML369-C) protein is Putative ankyrin repeat protein RBE_0601.